The following is a 204-amino-acid chain: Uridylate kinase (204 aa).

ATP is bound at residue 26-31 (GAGKGT). The interval 46–76 (SAGDLLRAEQGRAGSQYGELIKNCIKEGQIV) is NMP. Residues Arg52, 74–76 (QIV), 104–107 (GFPR), and Gln111 each bind a ribonucleoside 5'-phosphate. The interval 141–151 (ERGKTSGRSDD) is LID. Residue Arg142 participates in ATP binding. Residues Arg148 and Arg159 each coordinate a ribonucleoside 5'-phosphate. ATP is bound at residue Arg187.

This sequence belongs to the adenylate kinase family. UMP-CMP kinase subfamily. Monomer. The cofactor is Mg(2+).

It localises to the cytoplasm. It is found in the nucleus. It carries out the reaction UMP + ATP = UDP + ADP. Its function is as follows. Catalyzes the phosphorylation of pyrimidine nucleoside monophosphates at the expense of ATP. Plays an important role in de novo pyrimidine nucleotide biosynthesis. Has preference for UMP and dUMP as phosphate acceptors, but can also use CMP, dCMP, AMP, GMP, dGMP and dTMP. ATP and dATP are the best phosphate donors, but can also use GTP, dGTP, dCTP, and dTTP to some degree. This is Uridylate kinase from Saccharomyces cerevisiae (strain ATCC 204508 / S288c) (Baker's yeast).